We begin with the raw amino-acid sequence, 95 residues long: Integration host factor subunit beta (95 aa).

A disordered region spans residues 56-95 (RAPRTGRNPKTGETVELDGKHVPHFKPGKELRDRVNESIA). Residues 72–95 (LDGKHVPHFKPGKELRDRVNESIA) are compositionally biased toward basic and acidic residues.

Belongs to the bacterial histone-like protein family. As to quaternary structure, heterodimer of an alpha and a beta chain.

This protein is one of the two subunits of integration host factor, a specific DNA-binding protein that functions in genetic recombination as well as in transcriptional and translational control. The polypeptide is Integration host factor subunit beta (Pseudoalteromonas translucida (strain TAC 125)).